Here is a 412-residue protein sequence, read N- to C-terminus: Alpha-ketoglutarate-dependent sulfonate dioxygenase (412 aa).

Residue Ser-52 is modified to Phosphoserine. Fe cation is bound by residues His-218 and Asp-220. 2 residues coordinate 2-oxoglutarate: Thr-245 and Trp-352. Residue His-367 coordinates Fe cation. 2 residues coordinate 2-oxoglutarate: Arg-379 and Arg-383.

This sequence belongs to the TfdA dioxygenase family. Requires Fe(2+) as cofactor.

It functions in the pathway organosulfur degradation; alkanesulfonate degradation. Acts as an alpha-ketoglutarate-dependent dioxygenase active on sulfonates. Although taurine is a poor substrate, a variety of other sulfonates are utilized, with the best natural substrates being isethionate and taurocholate. This Saccharomyces cerevisiae (strain ATCC 204508 / S288c) (Baker's yeast) protein is Alpha-ketoglutarate-dependent sulfonate dioxygenase (JLP1).